Consider the following 363-residue polypeptide: Chorismate synthase (363 aa).

Residues 44 to 63 form a disordered region; sequence DLDRRKPGTSRHTTQRQEPD. NADP(+) is bound by residues arginine 48 and arginine 54. FMN is bound by residues 125 to 127, 237 to 238, glycine 277, 292 to 296, and arginine 318; these read RSS, NA, and KPTSS.

This sequence belongs to the chorismate synthase family. Homotetramer. FMNH2 serves as cofactor.

The catalysed reaction is 5-O-(1-carboxyvinyl)-3-phosphoshikimate = chorismate + phosphate. It participates in metabolic intermediate biosynthesis; chorismate biosynthesis; chorismate from D-erythrose 4-phosphate and phosphoenolpyruvate: step 7/7. Functionally, catalyzes the anti-1,4-elimination of the C-3 phosphate and the C-6 proR hydrogen from 5-enolpyruvylshikimate-3-phosphate (EPSP) to yield chorismate, which is the branch point compound that serves as the starting substrate for the three terminal pathways of aromatic amino acid biosynthesis. This reaction introduces a second double bond into the aromatic ring system. This chain is Chorismate synthase, found in Pseudomonas fluorescens (strain ATCC BAA-477 / NRRL B-23932 / Pf-5).